Reading from the N-terminus, the 1938-residue chain is Myosin-6 (1938 aa).

A Myosin N-terminal SH3-like domain is found at 31-80; that stretch reads DIRTECFVPDDKEEYVKAKIVSREGGKVTAETENGKTVTVKEDQVMQQNP. Positions 84–779 constitute a Myosin motor domain; that stretch reads DKIEDMAMLT…LLGLLEEMRD (696 aa). Residue Lys128 is modified to N6,N6,N6-trimethyllysine. 177–184 contributes to the ATP binding site; sequence GESGAGKT. Thr378 carries the post-translational modification Phosphothreonine. Ser416 is subject to Phosphoserine. Actin-binding regions lie at residues 656 to 678 and 758 to 772; these read LNKL…IPNE and KFGH…GLLG. An IQ domain is found at 782 to 811; the sequence is LSRIITRIQAQARGQLMRIEFKKMVERRDA. Calmodulin-binding regions lie at residues 789–806 and 815–832; these read IQAQ…KKMV and IQWN…PWMK. Residues 842–1938 adopt a coiled-coil conformation; that stretch reads KSAETEKEMA…GAKQKMHDEE (1097 aa). A phosphoserine mark is found at Ser1089 and Ser1138. Phosphotyrosine is present on Tyr1260. Ser1270 carries the phosphoserine modification. Phosphothreonine occurs at positions 1276 and 1283. Position 1308 is a phosphoserine (Ser1308). Residue Tyr1309 is modified to Phosphotyrosine. Residue Thr1310 is modified to Phosphothreonine. The residue at position 1511 (Ser1511) is a Phosphoserine. A phosphothreonine mark is found at Thr1514 and Thr1680. The disordered stretch occupies residues 1907–1938; sequence AEERADIAESQVNKLRAKSRDIGAKQKMHDEE. The segment covering 1924 to 1938 has biased composition (basic and acidic residues); the sequence is KSRDIGAKQKMHDEE.

This sequence belongs to the TRAFAC class myosin-kinesin ATPase superfamily. Myosin family. In terms of assembly, muscle myosin is a hexameric protein that consists of 2 heavy chain subunits (MHC), 2 alkali light chain subunits (MLC) and 2 regulatory light chain subunits (MLC-2).

The protein localises to the cytoplasm. It localises to the myofibril. In terms of biological role, muscle contraction. In Rattus norvegicus (Rat), this protein is Myosin-6 (Myh6).